A 438-amino-acid chain; its full sequence is MEYFKNVPQIKYEGPKSNNPYAFKFYNPDEIIDGKPLKEHLRFSVAYWHTFTANGTDPFGAPTMQRPWDHFTDPMDIAKARVEAAFELFEKLDVPFFCFHDRDIAPEGETLRETNKNLDTIVAMIKDYLKTSKTKVLWGTANLFSNPRFVHGAATSCNADVFAYAAAQVKKALEITKELGGQNYVFWGGREGYETLLNTDMELELDNLARFLHMAVEYAQEIGFEGQFLIEPKPKEPTKHQYDFDAASVHAFLKKYDLDKYFKLNIEANHATLAGHDFQHELRYARINNMLGSIDANMGDMLLGWDTDQYPTDIRMTTLAMYEVIKMGGFNKGGLNFDAKVRRASFEPEDLFLGHIAGMDAFAKGFKVAYKLVKDGVFDRFIEERYKSYREGIGAEIVSGKANFKTLEEYALNNPKIENKSGKQELLESILNQYLFSE.

Catalysis depends on residues His100 and Asp103. 7 residues coordinate Mg(2+): Glu231, Glu267, His270, Asp295, Asp306, Asp308, and Asp338.

The protein belongs to the xylose isomerase family. In terms of assembly, homotetramer. It depends on Mg(2+) as a cofactor.

It is found in the cytoplasm. The catalysed reaction is alpha-D-xylose = alpha-D-xylulofuranose. The polypeptide is Xylose isomerase (xylA) (Thermoanaerobacter pseudethanolicus (strain ATCC 33223 / 39E) (Clostridium thermohydrosulfuricum)).